Reading from the N-terminus, the 226-residue chain is Type-5 uracil-DNA glycosylase (226 aa).

Positions 23, 26, 125, and 140 each coordinate [4Fe-4S] cluster.

Belongs to the uracil-DNA glycosylase (UDG) superfamily. Type 5 (UDGb) family.

In terms of biological role, DNA glycosylase with broad substrate specificity. Can remove uracil from double-stranded DNA containing either a U/G or U/A base pair. Can also process hydroxymethyluracil (mispaired with guanine or adenine), hypoxanthine and fluorouracil. Exhibits a clear preference for double-stranded DNA substrates, but can also process uracil in single-stranded DNA, with lower efficiency. This Pyrobaculum aerophilum (strain ATCC 51768 / DSM 7523 / JCM 9630 / CIP 104966 / NBRC 100827 / IM2) protein is Type-5 uracil-DNA glycosylase.